The sequence spans 272 residues: MNKIFAAFKPRGLSSNAFLSTLKKKYKNKKAGYSGTLDPFAKGVLIVAFGQYTKLFRFLKKTPKTYKATLWLGVYSLSLDDQNIKEIKNIKEFDLANLQQIIDQMQGIISYTPPQFSAKRINGTRAYELAKKGIEANLKPCQMEVFDCKILSYNHPFLNIEITVSEGAYIRSYCELFARKLGINATLSSLERIKEGKFVYNNEKSLNVLKYIDLKPNFIKELNKLENGAKIFVEELEFHDEGDYYIETEKYFSIINIKENTVKYLLNKVEKC.

Catalysis depends on aspartate 38, which acts as the Nucleophile.

It belongs to the pseudouridine synthase TruB family. Type 1 subfamily.

The enzyme catalyses uridine(55) in tRNA = pseudouridine(55) in tRNA. Its function is as follows. Responsible for synthesis of pseudouridine from uracil-55 in the psi GC loop of transfer RNAs. This chain is tRNA pseudouridine synthase B, found in Campylobacter jejuni subsp. jejuni serotype O:23/36 (strain 81-176).